Here is a 381-residue protein sequence, read N- to C-terminus: Methanesulfonate monooxygenase (381 aa).

It belongs to the SsuD family.

The enzyme catalyses an alkanesulfonate + FMNH2 + O2 = an aldehyde + FMN + sulfite + H2O + 2 H(+). Its function is as follows. Catalyzes the desulfonation of aliphatic sulfonates. Shows highest activity with methanesulfonate. This is Methanesulfonate monooxygenase (msuD) from Pseudomonas aeruginosa (strain ATCC 15692 / DSM 22644 / CIP 104116 / JCM 14847 / LMG 12228 / 1C / PRS 101 / PAO1).